The chain runs to 37 residues: Omega/M-ectatotoxin-Et1a subunit A (37 aa).

A disulfide bridge links cysteine 12 with cysteine 34.

The protein belongs to the ectatomin family. Ectatomin-Et subfamily. As to quaternary structure, heterodimer of an A and a B chain; disulfide-linked. Expressed by the venom gland.

Its subcellular location is the secreted. It localises to the target cell membrane. In terms of biological role, algogenic for animals, human and insects. At high concentrations (0.5-1 uM), it acts as a pore-forming protein that forms nonselective cation channels both in cell and artificial membranes. It is weakly selective for cation over anions channel conductance is identical in both directions. At lower concentrations (1-10 nM), this heterodimer inhibits cardiac L-type calcium currents in isolated rat cardiac ventricular myocytes. This Ectatomma tuberculatum (Selva ant) protein is Omega/M-ectatotoxin-Et1a subunit A.